The chain runs to 145 residues: Large ribosomal subunit protein bL17 (145 aa).

It belongs to the bacterial ribosomal protein bL17 family. As to quaternary structure, part of the 50S ribosomal subunit. Contacts protein L32.

This is Large ribosomal subunit protein bL17 from Francisella tularensis subsp. tularensis (strain FSC 198).